The sequence spans 34 residues: Beta/mu-theraphotoxin-Pe1b (34 aa).

3 disulfide bridges follow: Cys2–Cys16, Cys9–Cys21, and Cys15–Cys28.

The protein belongs to the neurotoxin 10 (Hwtx-1) family. 54 (ProTx-1) subfamily. As to expression, expressed by the venom gland.

It localises to the secreted. Its function is as follows. Ion channel impairing toxin that inhibits several voltage-gated sodium channels. It acts by inhibiting the inward component of the sodium current and by shifting the voltage dependence of channel activation to more depolarized potentials. Its most potent activity is on Nav1.7/SCN9A (IC(50)=167 nM), followed by Nav1.6/SCN8A (IC(50)=696 nM), and Nav1.2/SCN2A (IC(50)=3.54 uM). This Phormingochilus everetti (Malaysian purple earth tiger tarantula) protein is Beta/mu-theraphotoxin-Pe1b.